We begin with the raw amino-acid sequence, 305 residues long: Virulence plasmid integrase pGP7-D (305 aa).

The region spanning 13–99 (LTFGEASEIW…CYISFTKFLY (87 aa)) is the Core-binding (CB) domain. Residues 127–303 (VKTVSISKKE…GNSSVANIPT (177 aa)) enclose the Tyr recombinase domain. Residues K188 and R257 contribute to the active site. The active-site O-(3'-phospho-DNA)-tyrosine intermediate is the Y289.

This sequence belongs to the 'phage' integrase family.

This chain is Virulence plasmid integrase pGP7-D, found in Chlamydia muridarum (strain MoPn / Nigg).